Reading from the N-terminus, the 493-residue chain is MEVHWVCMSAATLLVCYIFGSKFVRNLNGWYYDVKLRRKEHPLPPGDMGWPLIGDLLSFIKDFSSGHPDSFINNLVLKYGRSGIYKTHLFGNPSIIVCEPQMCRRVLTDDVNFKLGYPKSIKELARCRPMIDVSNAEHRLFRRLITSPIVGHKALAMYLERLEEIVINSLEELSSMKHPVELLKEMKKVSFKAIVHVFMGSSNQDIIKKIGSSFTDLYNGMFSIPINVPGFTFHKALEARKKLAKIVQPVVDERRLMIENGPQEGSQRKDLIDILLEVKDENGRKLEDEDISDLLIGLLFAGHESTATSLMWSITYLTQHPHILKKAKEEQEEITRTRFSSQKQLSLKEIKQMVYLSQVIDETLRCANIAFATFREATADVNINGYIIPKGWRVLIWARAIHMDSEYYPNPEEFNPSRWDDYNAKAGTFLPFGAGSRLCPGADLAKLEISIFLHYFLRNYRLERINPECHVTSLPVSKPTDNCLAKVIKVSCA.

A helical membrane pass occupies residues Cys-7–Phe-23. Cys-439 provides a ligand contact to heme.

The protein belongs to the cytochrome P450 family. It depends on heme as a cofactor. Expressed in roots and stolons. Not detected in leaves and stems.

Its subcellular location is the membrane. It carries out the reaction beta-amyrin + 2 reduced [NADPH--hemoprotein reductase] + 2 O2 = 11-oxo-beta-amyrin + 2 oxidized [NADPH--hemoprotein reductase] + 3 H2O + 2 H(+). It catalyses the reaction beta-amyrin + reduced [NADPH--hemoprotein reductase] + O2 = 11alpha-hydroxy-beta-amyrin + oxidized [NADPH--hemoprotein reductase] + H2O + H(+). The catalysed reaction is 11alpha-hydroxy-beta-amyrin + reduced [NADPH--hemoprotein reductase] + O2 = 11-oxo-beta-amyrin + oxidized [NADPH--hemoprotein reductase] + 2 H2O + H(+). In terms of biological role, involved in the biosynthesis of Glycyrrhetinic acid (GA), a natural product which exhibits anti-inflammatory activity. Catalyzes 2 successive oxidations of beta-amyrin, producing a precursor of the triterpene sweetener glycyrrhizin. Unable to use 11-deoxoglycyrrhetinic acid or ent-kaurenoic acid as substrates. This is Beta-amyrin 11-oxidase from Glycyrrhiza uralensis (Chinese licorice).